The sequence spans 400 residues: Formate-dependent phosphoribosylglycinamide formyltransferase (400 aa).

Residues 22–23 (EL) and Glu82 contribute to the N(1)-(5-phospho-beta-D-ribosyl)glycinamide site. ATP contacts are provided by residues Arg115, Lys157, 162–167 (SSGKGQ), 197–200 (EGFV), and Glu205. The ATP-grasp domain maps to 120-315 (RLAAETLGLP…EFELHARAIL (196 aa)). Residues Glu274 and Glu286 each coordinate Mg(2+). N(1)-(5-phospho-beta-D-ribosyl)glycinamide contacts are provided by residues Asp293, Lys362, and 369–370 (RR).

Belongs to the PurK/PurT family. In terms of assembly, homodimer.

It carries out the reaction N(1)-(5-phospho-beta-D-ribosyl)glycinamide + formate + ATP = N(2)-formyl-N(1)-(5-phospho-beta-D-ribosyl)glycinamide + ADP + phosphate + H(+). The protein operates within purine metabolism; IMP biosynthesis via de novo pathway; N(2)-formyl-N(1)-(5-phospho-D-ribosyl)glycinamide from N(1)-(5-phospho-D-ribosyl)glycinamide (formate route): step 1/1. Involved in the de novo purine biosynthesis. Catalyzes the transfer of formate to 5-phospho-ribosyl-glycinamide (GAR), producing 5-phospho-ribosyl-N-formylglycinamide (FGAR). Formate is provided by PurU via hydrolysis of 10-formyl-tetrahydrofolate. The polypeptide is Formate-dependent phosphoribosylglycinamide formyltransferase (Mycolicibacterium gilvum (strain PYR-GCK) (Mycobacterium gilvum (strain PYR-GCK))).